A 278-amino-acid polypeptide reads, in one-letter code: 3-methyl-2-oxobutanoate hydroxymethyltransferase (278 aa).

The Mg(2+) site is built by Asp-43 and Asp-82. 3-methyl-2-oxobutanoate-binding positions include 43-44 (DS), Asp-82, and Lys-112. Glu-114 provides a ligand contact to Mg(2+). Glu-181 acts as the Proton acceptor in catalysis.

Belongs to the PanB family. In terms of assembly, homodecamer; pentamer of dimers. It depends on Mg(2+) as a cofactor.

It localises to the cytoplasm. The catalysed reaction is 3-methyl-2-oxobutanoate + (6R)-5,10-methylene-5,6,7,8-tetrahydrofolate + H2O = 2-dehydropantoate + (6S)-5,6,7,8-tetrahydrofolate. It functions in the pathway cofactor biosynthesis; (R)-pantothenate biosynthesis; (R)-pantoate from 3-methyl-2-oxobutanoate: step 1/2. Its function is as follows. Catalyzes the reversible reaction in which hydroxymethyl group from 5,10-methylenetetrahydrofolate is transferred onto alpha-ketoisovalerate to form ketopantoate. This Bacillus cereus (strain G9842) protein is 3-methyl-2-oxobutanoate hydroxymethyltransferase.